We begin with the raw amino-acid sequence, 469 residues long: Adenosylhomocysteinase (469 aa).

Substrate is bound by residues T63, D139, and E164. NAD(+) is bound at residue 165–167; it reads TTT. Substrate-binding residues include K194 and D198. Residues N199, 228–233, E251, N300, 321–323, and N375 each bind NAD(+); these read GYGDVG and IGH.

It belongs to the adenosylhomocysteinase family. NAD(+) is required as a cofactor.

Its subcellular location is the cytoplasm. It carries out the reaction S-adenosyl-L-homocysteine + H2O = L-homocysteine + adenosine. It participates in amino-acid biosynthesis; L-homocysteine biosynthesis; L-homocysteine from S-adenosyl-L-homocysteine: step 1/1. May play a key role in the regulation of the intracellular concentration of adenosylhomocysteine. The sequence is that of Adenosylhomocysteinase from Pseudomonas fluorescens (strain SBW25).